The following is a 121-amino-acid chain: Large ribosomal subunit protein uL18 (121 aa).

The protein belongs to the universal ribosomal protein uL18 family. Part of the 50S ribosomal subunit; part of the 5S rRNA/L5/L18/L25 subcomplex. Contacts the 5S and 23S rRNAs.

Functionally, this is one of the proteins that bind and probably mediate the attachment of the 5S RNA into the large ribosomal subunit, where it forms part of the central protuberance. The sequence is that of Large ribosomal subunit protein uL18 from Ehrlichia chaffeensis (strain ATCC CRL-10679 / Arkansas).